Here is a 314-residue protein sequence, read N- to C-terminus: MLIQILFLIILTLNCSYSTSYSTSNGIRLMTFNIWNSGANVENGQQKIAKHILMVNPDVVALQEVYANVTRNLTLMLGHPWVAVERNHEYPDTAILTRHVLIPNTNLSTSGAVGVKIMLRTGFMIHFWSLHLDYTSYGPYAANNKLVDKLDQIMAGENVGRGPQIYEILNLPMMKKWMEKVEDVPIFIAGDFNGPSHLDWTEQTKKIHGDWVIRWPATKELEEREFSDTFREIYPNVVSDPGITWSTVNKFNPEWNYTIPEPQDRIDFLFYKGPVVPYQILTYSGCEKPQRIPFHSKNDYPSDHFAVFADYTFI.

An N-terminal signal peptide occupies residues 1–18 (MLIQILFLIILTLNCSYS). 4 N-linked (GlcNAc...) asparagine glycosylation sites follow: Asn68, Asn72, Asn106, and Asn256.

It is found in the secreted. This is an uncharacterized protein from Caenorhabditis elegans.